A 143-amino-acid chain; its full sequence is Granulocyte-macrophage colony-stimulating factor (143 aa).

Positions 1 to 17 (MWLQNLLLLGTVVCSFS) are cleaved as a signal peptide. An O-linked (GalNAc...) threonine glycan is attached at T27. N44 and N54 each carry an N-linked (GlcNAc...) asparagine glycan. 2 disulfide bridges follow: C70–C112 and C104–C137.

This sequence belongs to the GM-CSF family. Monomer. The signaling GM-CSF receptor complex is a dodecamer of two head-to-head hexamers of two alpha, two beta, and two ligand subunits.

Its subcellular location is the secreted. Cytokine that stimulates the growth and differentiation of hematopoietic precursor cells from various lineages, including granulocytes, macrophages, eosinophils and erythrocytes. The polypeptide is Granulocyte-macrophage colony-stimulating factor (CSF2) (Bos taurus (Bovine)).